Consider the following 144-residue polypeptide: MLIPKENRKAIHQALFSQGVLVAKKDFNLPKHPEVGVPNLQVIKACQSLDSRGYLKTRYNWGWFYYTLTNEGVEYLREYLHLPAEVVPATHKRQVRPTAPRAGRPEPRERASADAGYRRAEKKDEGAAPSGFAPSFRGGFGRPQ.

A disordered region spans residues 90–144 (THKRQVRPTAPRAGRPEPRERASADAGYRRAEKKDEGAAPSGFAPSFRGGFGRPQ). Basic and acidic residues predominate over residues 103–126 (GRPEPRERASADAGYRRAEKKDEG).

Belongs to the eukaryotic ribosomal protein eS10 family. In terms of assembly, component of the small ribosomal subunit (SSU). Mature yeast ribosomes consist of a small (40S) and a large (60S) subunit. The 40S small subunit contains 1 molecule of ribosomal RNA (18S rRNA) and at least 33 different proteins. The large 60S subunit contains 3 rRNA molecules (25S, 5.8S and 5S rRNA) and at least 46 different proteins. eS10 interacts with GCN1 (via middle region); this interaction is direct and promotes GCN2 kinase activity.

It localises to the cytoplasm. Functionally, component of the ribosome, a large ribonucleoprotein complex responsible for the synthesis of proteins in the cell. The small ribosomal subunit (SSU) binds messenger RNAs (mRNAs) and translates the encoded message by selecting cognate aminoacyl-transfer RNA (tRNA) molecules. The large subunit (LSU) contains the ribosomal catalytic site termed the peptidyl transferase center (PTC), which catalyzes the formation of peptide bonds, thereby polymerizing the amino acids delivered by tRNAs into a polypeptide chain. The nascent polypeptides leave the ribosome through a tunnel in the LSU and interact with protein factors that function in enzymatic processing, targeting, and the membrane insertion of nascent chains at the exit of the ribosomal tunnel. eS10 plays a role as a positive regulator of the GCN2 kinase activity by stimulating GCN1-mediated GCN2 activation. The chain is Small ribosomal subunit protein eS10A (rps1001) from Schizosaccharomyces pombe (strain 972 / ATCC 24843) (Fission yeast).